The sequence spans 158 residues: Cytochrome c-type biogenesis protein CcmE (158 aa).

The Cytoplasmic portion of the chain corresponds to 1–23 (MNSQSFKNFPSLKFISKKRRKER). The chain crosses the membrane as a helical; Signal-anchor for type II membrane protein span at residues 24–44 (LLMVLLCLFIMAITTGLIVYA). The Periplasmic segment spans residues 45-158 (MRNTANFFRT…DRLKKHHDIK (114 aa)). Heme contacts are provided by His-138 and Tyr-142.

Belongs to the CcmE/CycJ family.

It is found in the cell inner membrane. In terms of biological role, heme chaperone required for the biogenesis of c-type cytochromes. Transiently binds heme delivered by CcmC and transfers the heme to apo-cytochromes in a process facilitated by CcmF and CcmH. The chain is Cytochrome c-type biogenesis protein CcmE from Bartonella bacilliformis (strain ATCC 35685 / KC583 / Herrer 020/F12,63).